The primary structure comprises 304 residues: Probable phytol kinase 2, chloroplastic (304 aa).

The N-terminal 59 residues, 1–59 (MVSLISAHLLSLPSSAPRSRPQSRPPLSPPAAAAAASCSFDLPRPRRLVADGSRRKGTM), are a transit peptide targeting the chloroplast. Transmembrane regions (helical) follow at residues 68 to 88 (SGLA…LALL), 113 to 133 (IGMV…APFL), 134 to 154 (AAVA…GVMK), 170 to 190 (ELLK…SIFW), 194 to 214 (PIAI…DIVG), 231 to 251 (AGSI…MHYF), and 256 to 276 (FIEE…TAAL).

The protein belongs to the polyprenol kinase family.

It is found in the plastid. Its subcellular location is the chloroplast membrane. It carries out the reaction phytol + CTP = phytyl phosphate + CDP + H(+). The protein operates within cofactor biosynthesis; tocopherol biosynthesis. Its function is as follows. Involved in the activation and reutilization of phytol from chlorophyll degradation in plant metabolism, including tocopherol biosynthesis. Catalyzes the conversion of phytol to phytol monophosphate (PMP). This chain is Probable phytol kinase 2, chloroplastic, found in Oryza sativa subsp. japonica (Rice).